Here is a 397-residue protein sequence, read N- to C-terminus: G2/mitotic-specific cyclin-B1 (397 aa).

Residues M1–Q17 are compositionally biased toward polar residues. The interval M1–P30 is disordered.

It belongs to the cyclin family. Cyclin AB subfamily. As to quaternary structure, interacts with the CDK1 protein kinase to form a serine/threonine kinase holoenzyme complex also known as maturation promoting factor (MPF). The cyclin subunit imparts substrate specificity to the complex.

Functionally, essential for the control of the cell cycle at the G2/M (mitosis) transition. In Carassius auratus (Goldfish), this protein is G2/mitotic-specific cyclin-B1 (ccnb1).